The chain runs to 332 residues: L-lactate dehydrogenase A chain (332 aa).

N-acetylalanine is present on A2. An N6-acetyllysine; alternate modification is found at K5. K5 carries the post-translational modification N6-succinyllysine; alternate. K14 bears the N6-acetyllysine mark. Residue 29–57 (GAVGMACAISILMKDLADELALVDVMEDK) coordinates NAD(+). N6-acetyllysine; alternate is present on K57. A Glycyl lysine isopeptide (Lys-Gly) (interchain with G-Cter in SUMO2); alternate cross-link involves residue K57. Residue K81 is modified to N6-acetyllysine. R99 is an NAD(+) binding site. R106 provides a ligand contact to substrate. K118 bears the N6-acetyllysine; alternate mark. Residue K118 is modified to N6-succinyllysine; alternate. The residue at position 126 (K126) is an N6-acetyllysine. N138 is a binding site for NAD(+). Residues N138 and R169 each coordinate substrate. The Proton acceptor role is filled by H193. Residues K224 and K232 each carry the N6-acetyllysine modification. Y239 carries the post-translational modification Phosphotyrosine. K243 is subject to N6-acetyllysine. T248 lines the substrate pocket. The residue at position 309 (T309) is a Phosphothreonine. S310 is subject to Phosphoserine. K318 is modified (N6-acetyllysine; alternate). K318 is subject to N6-succinyllysine; alternate. T322 is modified (phosphothreonine).

This sequence belongs to the LDH/MDH superfamily. LDH family. Homotetramer. Interacts with PTEN upstream reading frame protein MP31. Post-translationally, ISGylated.

It is found in the cytoplasm. It catalyses the reaction (S)-lactate + NAD(+) = pyruvate + NADH + H(+). Its pathway is fermentation; pyruvate fermentation to lactate; (S)-lactate from pyruvate: step 1/1. In terms of biological role, interconverts simultaneously and stereospecifically pyruvate and lactate with concomitant interconversion of NADH and NAD(+). The sequence is that of L-lactate dehydrogenase A chain (LDHA) from Oryctolagus cuniculus (Rabbit).